The following is a 288-amino-acid chain: Pyridoxal kinase PdxY (288 aa).

Substrate contacts are provided by residues Ser12 and 47–48 (TQ). ATP-binding positions include Asp114, Glu151, Lys184, and 211–214 (RPLL). Asp225 is a substrate binding site.

Belongs to the pyridoxine kinase family. PdxY subfamily. Homodimer. Mg(2+) serves as cofactor.

The catalysed reaction is pyridoxal + ATP = pyridoxal 5'-phosphate + ADP + H(+). It functions in the pathway cofactor metabolism; pyridoxal 5'-phosphate salvage; pyridoxal 5'-phosphate from pyridoxal: step 1/1. In terms of biological role, pyridoxal kinase involved in the salvage pathway of pyridoxal 5'-phosphate (PLP). Catalyzes the phosphorylation of pyridoxal to PLP. The sequence is that of Pyridoxal kinase PdxY from Pseudomonas paraeruginosa (strain DSM 24068 / PA7) (Pseudomonas aeruginosa (strain PA7)).